We begin with the raw amino-acid sequence, 26 residues long: Halocyntin (26 aa).

Has strong antibacterial activity against the Gram-positive bacteria M.luteus, S.aureus, B.megaterium, A.viridans and E.faecalis, and against the Gram-negative bacterium K.pneumoniae. Has less potent antibacterial activity against the Gram-negative bacteria E.coli DH5alpha, S.typhimurium, P.aeruginosa, E.aerogenes and N.gonorrhoeae. Has moderate hemolytic activity against sheep erythrocytes. The sequence is that of Halocyntin from Halocynthia papillosa (Red sea-squirt).